A 1039-amino-acid polypeptide reads, in one-letter code: Error-prone DNA polymerase (1039 aa).

Belongs to the DNA polymerase type-C family. DnaE2 subfamily.

It is found in the cytoplasm. The enzyme catalyses DNA(n) + a 2'-deoxyribonucleoside 5'-triphosphate = DNA(n+1) + diphosphate. DNA polymerase involved in damage-induced mutagenesis and translesion synthesis (TLS). It is not the major replicative DNA polymerase. In Idiomarina loihiensis (strain ATCC BAA-735 / DSM 15497 / L2-TR), this protein is Error-prone DNA polymerase.